The primary structure comprises 375 residues: G-protein coupled estrogen receptor 1 (375 aa).

The residue at position 1 (Met-1) is an N-acetylmethionine. The Extracellular portion of the chain corresponds to 1-62 (MDATTPAQTV…QQYVIALFLS (62 aa)). N-linked (GlcNAc...) asparagine glycosylation is found at Asn-32 and Asn-44. A helical transmembrane segment spans residues 63–84 (CLYTIFLFPIGFVGNILILVVN). Topologically, residues 85-96 (ISFREKMTIPDL) are cytoplasmic. A helical membrane pass occupies residues 97-120 (YFINLAAADLILVADSLIEVFNLD). Topologically, residues 121-132 (EQYYDIAVLCTF) are extracellular. Residues Cys-130 and Cys-207 are joined by a disulfide bond. Residues 133–153 (MSLFLQINMYSSVFFLTWMSF) form a helical membrane-spanning segment. Residues 154–175 (DRYLALAKAMRCGLFRTKHHAR) lie on the Cytoplasmic side of the membrane. A helical transmembrane segment spans residues 176–194 (LSCGLIWMASVSATLVPFT). The Extracellular portion of the chain corresponds to 195–220 (AVHLRHTEEACFCFADVREVQWLEVT). The helical transmembrane segment at 221–236 (LGFIMPFAIIGLCYSL) threads the bilayer. Over 237-259 (IVRALIRAHRHRGLRPRRQKALR) the chain is Cytoplasmic. Residues 260 to 280 (MIFAVVLVFFICWLPENVFIS) form a helical membrane-spanning segment. Residues 281-306 (VHLLQWTQPGDTPCKQSFRHAYPLTG) lie on the Extracellular side of the membrane. Residues 307–327 (HIVNLAAFSNSCLNPLIYSFL) form a helical membrane-spanning segment. Residues 328-375 (GETFRDKLRLYVEQKTSLPALNRFCHATLKAVIPDSTEQSEVRFSSAV) are Cytoplasmic-facing.

Belongs to the G-protein coupled receptor 1 family. As to quaternary structure, interacts with RAMP3; the interaction confers proper subcellular localization and function in cardioprotection. Interacts with KRT7 and KRT8. Interacts with EGFR; the interaction increases after agonist-induced stimulation in cancer-associated fibroblasts (CAF). Interacts with EGFR and ESR1. Interacts (via C-terminus tail motif) with DLG4 (via N-terminus tandem pair of PDZ domains); the interaction is direct and induces the increase of GPER1 protein levels residing at the plasma membrane surface in a estradiol-independent manner. Homodimer. Heterodimer; heterodimerizes with other G-protein-coupled receptor (GPCRs) like CRHR1, HTR1A and PAQR8. In terms of processing, ubiquitinated; ubiquitination occurs at the plasma membrane and leads to proteasome-mediated degradation. Post-translationally, N-glycosylated. In terms of tissue distribution, expressed in brain, heart, spleen, preadipocytes, mature adipocytes and primary hippocampal neurons. Expressed in neurons of the hippocampus, hypothalamic paraventricular nucleus (PVH), supraoptic nucleus (SON) and the median eminence. Expressed in the nucleus ambiguous (at protein level). Expressed in brain, pituitary gland, adrenal medulla, renal pelvis, ovary, endothelial cells, visceral fat tissues and islets of Langerhans.

The protein resides in the nucleus. The protein localises to the cytoplasm. Its subcellular location is the perinuclear region. It localises to the cytoskeleton. It is found in the cell membrane. The protein resides in the endoplasmic reticulum membrane. The protein localises to the golgi apparatus membrane. Its subcellular location is the cell projection. It localises to the dendrite. It is found in the cytoplasmic vesicle membrane. The protein resides in the early endosome. The protein localises to the recycling endosome. Its subcellular location is the golgi apparatus. It localises to the trans-Golgi network. It is found in the dendritic spine membrane. The protein resides in the axon. The protein localises to the postsynaptic density. Its subcellular location is the mitochondrion membrane. In terms of biological role, G-protein coupled estrogen receptor that binds to 17-beta-estradiol (E2) with high affinity, leading to rapid and transient activation of numerous intracellular signaling pathways. Stimulates cAMP production, calcium mobilization and tyrosine kinase Src inducing the release of heparin-bound epidermal growth factor (HB-EGF) and subsequent transactivation of the epidermal growth factor receptor (EGFR), activating downstream signaling pathways such as PI3K/Akt and ERK/MAPK. Mediates pleiotropic functions among others in the cardiovascular, endocrine, reproductive, immune and central nervous systems. Has a role in cardioprotection by reducing cardiac hypertrophy and perivascular fibrosis in a RAMP3-dependent manner. Regulates arterial blood pressure by stimulating vasodilation and reducing vascular smooth muscle and microvascular endothelial cell proliferation. Plays a role in blood glucose homeostasis contributing to the insulin secretion response by pancreatic beta cells. Triggers mitochondrial apoptosis during pachytene spermatocyte differentiation. Stimulates uterine epithelial cell proliferation. Enhances uterine contractility in response to oxytocin. Contributes to thymic atrophy by inducing apoptosis. Attenuates TNF-mediated endothelial expression of leukocyte adhesion molecules. Promotes neuritogenesis in developing hippocampal neurons. Plays a role in acute neuroprotection against NMDA-induced excitotoxic neuronal death. Increases firing activity and intracellular calcium oscillations in luteinizing hormone-releasing hormone (LHRH) neurons. Inhibits early osteoblast proliferation at growth plate during skeletal development. Inhibits mature adipocyte differentiation and lipid accumulation. Involved in the recruitment of beta-arrestin 2 ARRB2 at the plasma membrane in epithelial cells. Also functions as a receptor for aldosterone mediating rapid regulation of vascular contractibility through the PI3K/ERK signaling pathway. Involved in cancer progression regulation. Stimulates cancer-associated fibroblast (CAF) proliferation by a rapid genomic response through the EGFR/ERK transduction pathway. Associated with EGFR, may act as a transcription factor activating growth regulatory genes (c-fos, cyclin D1). Promotes integrin alpha-5/beta-1 and fibronectin (FN) matrix assembly in breast cancer cells. This chain is G-protein coupled estrogen receptor 1 (Gper1), found in Mus musculus (Mouse).